Here is a 190-residue protein sequence, read N- to C-terminus: Guanylate kinase (190 aa).

Positions Asn-3–Glu-185 constitute a Guanylate kinase-like domain. Ala-10 to Ser-17 contributes to the ATP binding site.

This sequence belongs to the guanylate kinase family.

It is found in the cytoplasm. The catalysed reaction is GMP + ATP = GDP + ADP. Its function is as follows. Essential for recycling GMP and indirectly, cGMP. In Francisella tularensis subsp. tularensis (strain FSC 198), this protein is Guanylate kinase.